A 95-amino-acid polypeptide reads, in one-letter code: Small ribosomal subunit protein uS15 (95 aa).

Belongs to the universal ribosomal protein uS15 family. As to quaternary structure, part of the 30S ribosomal subunit. Forms a bridge to the 50S subunit in the 70S ribosome, contacting the 23S rRNA.

Its function is as follows. One of the primary rRNA binding proteins, it binds directly to 16S rRNA where it helps nucleate assembly of the platform of the 30S subunit by binding and bridging several RNA helices of the 16S rRNA. Forms an intersubunit bridge (bridge B4) with the 23S rRNA of the 50S subunit in the ribosome. This Streptomyces avermitilis (strain ATCC 31267 / DSM 46492 / JCM 5070 / NBRC 14893 / NCIMB 12804 / NRRL 8165 / MA-4680) protein is Small ribosomal subunit protein uS15.